Here is a 621-residue protein sequence, read N- to C-terminus: Type 2 DNA topoisomerase 6 subunit B (621 aa).

ATP-binding positions include asparagine 48, aspartate 80, 101 to 102 (SR), 111 to 118 (GQQGIGIS), and lysine 435.

Belongs to the TOP6B family. Homodimer. Heterotetramer of two Top6A and two Top6B chains.

It carries out the reaction ATP-dependent breakage, passage and rejoining of double-stranded DNA.. Its function is as follows. Relaxes both positive and negative superturns and exhibits a strong decatenase activity. The sequence is that of Type 2 DNA topoisomerase 6 subunit B from Methanosarcina barkeri (strain Fusaro / DSM 804).